The sequence spans 174 residues: GLVGAPATLSTAPIAYGGYGGYGAYGGSLLRAAPIARVASPLAYAAPVARVAAPLAYAAPYARAAVAAPVAVAKTVVADEYDPNPQYSFGYDVQDGLTGDSKNQVESRSGDVVQGSYSLVDPDGTRRTVEYTADPINGFNAVVHREPLVAKAVVAAPAIAKVHAPLAYSGGYLH.

Repeat copies occupy residues 45–48 and 67–70. The region spanning 84–150 is the Chitin-binding type R&amp;R domain; it reads NPQYSFGYDV…AVVHREPLVA (67 aa). The stretch at 155–158 is repeat 3; the sequence is AAPA.

Component of the cuticle of the larva of Tenebrio molitor. In Tenebrio molitor (Yellow mealworm beetle), this protein is Larval cuticle protein A1A.